A 492-amino-acid chain; its full sequence is N-succinylglutamate 5-semialdehyde dehydrogenase (492 aa).

225–230 is an NAD(+) binding site; the sequence is GSSNTG. Catalysis depends on residues Glu248 and Cys282.

This sequence belongs to the aldehyde dehydrogenase family. AstD subfamily.

The enzyme catalyses N-succinyl-L-glutamate 5-semialdehyde + NAD(+) + H2O = N-succinyl-L-glutamate + NADH + 2 H(+). It functions in the pathway amino-acid degradation; L-arginine degradation via AST pathway; L-glutamate and succinate from L-arginine: step 4/5. Catalyzes the NAD-dependent reduction of succinylglutamate semialdehyde into succinylglutamate. This chain is N-succinylglutamate 5-semialdehyde dehydrogenase, found in Colwellia psychrerythraea (strain 34H / ATCC BAA-681) (Vibrio psychroerythus).